The primary structure comprises 298 residues: Lipoyl synthase (298 aa).

Cysteine 40, cysteine 45, cysteine 51, cysteine 67, cysteine 71, cysteine 74, and serine 280 together coordinate [4Fe-4S] cluster. The Radical SAM core domain occupies 53–269 (AVRRTATFMI…KEIAMQKGFS (217 aa)).

Belongs to the radical SAM superfamily. Lipoyl synthase family. It depends on [4Fe-4S] cluster as a cofactor.

Its subcellular location is the cytoplasm. The enzyme catalyses [[Fe-S] cluster scaffold protein carrying a second [4Fe-4S](2+) cluster] + N(6)-octanoyl-L-lysyl-[protein] + 2 oxidized [2Fe-2S]-[ferredoxin] + 2 S-adenosyl-L-methionine + 4 H(+) = [[Fe-S] cluster scaffold protein] + N(6)-[(R)-dihydrolipoyl]-L-lysyl-[protein] + 4 Fe(3+) + 2 hydrogen sulfide + 2 5'-deoxyadenosine + 2 L-methionine + 2 reduced [2Fe-2S]-[ferredoxin]. Its pathway is protein modification; protein lipoylation via endogenous pathway; protein N(6)-(lipoyl)lysine from octanoyl-[acyl-carrier-protein]. Catalyzes the radical-mediated insertion of two sulfur atoms into the C-6 and C-8 positions of the octanoyl moiety bound to the lipoyl domains of lipoate-dependent enzymes, thereby converting the octanoylated domains into lipoylated derivatives. In Bacillus subtilis (strain 168), this protein is Lipoyl synthase.